The primary structure comprises 613 residues: Replication protein E1 (613 aa).

Residues 1–31 are disordered; that stretch reads MDPNLKGITGQSFLDDQAECSESDNSEQGCE. The span at 16–31 shows a compositional bias: acidic residues; it reads DQAECSESDNSEQGCE. The short motif at 71 to 73 is the Nuclear localization signal element; that stretch reads KRK. Phosphoserine; by host is present on residues Ser77 and Ser92. Residues 128 to 152 form a disordered region; the sequence is YGSLASQSLSGQSQKNGKNRVNNGN. Low complexity predominate over residues 129–152; sequence GSLASQSLSGQSQKNGKNRVNNGN. The tract at residues 150 to 317 is DNA-binding region; sequence NGNKENIDCT…TSITHQIQED (168 aa). An SF3 helicase domain is found at 413–566; that stretch reads YQNINFLSFL…FPLDENGKPA (154 aa). Residue 442-449 coordinates ATP; it reads GPPNTGKS. A compositionally biased stretch (acidic residues) spans 588-597; it reads TEPEDEDDGD. A disordered region spans residues 588–613; the sequence is TEPEDEDDGDPPSPFRCSARAAARDL.

The protein belongs to the papillomaviridae E1 protein family. Can form hexamers. Interacts with E2 protein; this interaction increases E1 DNA binding specificity. Interacts with host DNA polymerase subunit POLA2. Interacts with host single stranded DNA-binding protein RPA1. Interacts with host TOP1; this interaction stimulates the enzymatic activity of TOP1. Post-translationally, phosphorylated.

It is found in the host nucleus. The catalysed reaction is Couples ATP hydrolysis with the unwinding of duplex DNA by translocating in the 3'-5' direction.. It catalyses the reaction ATP + H2O = ADP + phosphate + H(+). Its function is as follows. ATP-dependent DNA 3'-5' helicase required for initiation of viral DNA replication. It forms a complex with the viral E2 protein. The E1-E2 complex binds to the replication origin which contains binding sites for both proteins. During the initial step, a dimer of E1 interacts with a dimer of protein E2 leading to a complex that binds the viral origin of replication with high specificity. Then, a second dimer of E1 displaces the E2 dimer in an ATP-dependent manner to form the E1 tetramer. Following this, two E1 monomers are added to each half of the site, which results in the formation of two E1 trimers on the viral ori. Subsequently, two hexamers will be created. The double hexamer acts as a bi-directional helicase machinery and unwinds the viral DNA and then recruits the host DNA polymerase to start replication. The polypeptide is Replication protein E1 (Bos taurus (Bovine)).